The sequence spans 785 residues: Pre-rRNA-processing protein TSR1 homolog (785 aa).

The interval 1–59 (MSTTGHRAGVFKKPSKPHKSWKGKRTKGEITSENRGREGVKQLTRSAHSTHRTISKDAR) is disordered. The segment covering 9 to 25 (GVFKKPSKPHKSWKGKR) has biased composition (basic residues). The span at 26 to 40 (TKGEITSENRGREGV) shows a compositional bias: basic and acidic residues. The Bms1-type G domain occupies 83–243 (APCLVTVVSL…LRILNETKKK (161 aa)). Positions 307 to 426 (PHPLKAHNKT…GETTASEMMF (120 aa)) are disordered. Residues 376 to 409 (LDDEDDEDEEDSDEDMDDSDNEEVEDDSEEEEPM) show a composition bias toward acidic residues.

This sequence belongs to the TRAFAC class translation factor GTPase superfamily. Bms1-like GTPase family. TSR1 subfamily.

Its subcellular location is the nucleus. The protein localises to the nucleolus. Required during maturation of the 40S ribosomal subunit in the nucleolus. This Caenorhabditis elegans protein is Pre-rRNA-processing protein TSR1 homolog (tag-151).